An 856-amino-acid chain; its full sequence is Translation initiation factor IF-2 (856 aa).

The 171-residue stretch at 356 to 526 folds into the tr-type G domain; the sequence is PRAPVVTVMG…LLIADLLELK (171 aa). A G1 region spans residues 365-372; it reads GHVDHGKT. Residue 365-372 coordinates GTP; it reads GHVDHGKT. A G2 region spans residues 390-394; it reads GITQH. The tract at residues 412-415 is G3; sequence DTPG. GTP is bound by residues 412–416 and 466–469; these read DTPGH and NKID. A G4 region spans residues 466 to 469; sequence NKID. Positions 502–504 are G5; sequence SAK.

This sequence belongs to the TRAFAC class translation factor GTPase superfamily. Classic translation factor GTPase family. IF-2 subfamily.

The protein resides in the cytoplasm. One of the essential components for the initiation of protein synthesis. Protects formylmethionyl-tRNA from spontaneous hydrolysis and promotes its binding to the 30S ribosomal subunits. Also involved in the hydrolysis of GTP during the formation of the 70S ribosomal complex. The chain is Translation initiation factor IF-2 from Ehrlichia ruminantium (strain Welgevonden).